A 264-amino-acid polypeptide reads, in one-letter code: Phosphonoacetaldehyde hydrolase (264 aa).

Aspartate 9 serves as the catalytic Nucleophile. Mg(2+)-binding residues include aspartate 9 and alanine 11. The active-site Schiff-base intermediate with substrate is the lysine 50. Mg(2+) is bound at residue aspartate 183.

This sequence belongs to the HAD-like hydrolase superfamily. PhnX family. Homodimer. Mg(2+) is required as a cofactor.

It carries out the reaction phosphonoacetaldehyde + H2O = acetaldehyde + phosphate + H(+). Its function is as follows. Involved in phosphonate degradation. In Bacillus thuringiensis (strain Al Hakam), this protein is Phosphonoacetaldehyde hydrolase.